The following is a 44-amino-acid chain: Photosystem I reaction center subunit IX (44 aa).

A helical membrane pass occupies residues 7-27; it reads YLSVAPVLSTLWFGSLAGLLI.

Belongs to the PsaJ family.

The protein localises to the plastid. It localises to the chloroplast thylakoid membrane. Functionally, may help in the organization of the PsaE and PsaF subunits. This chain is Photosystem I reaction center subunit IX, found in Lactuca sativa (Garden lettuce).